A 399-amino-acid chain; its full sequence is uncharacterized protein (399 aa).

Residues 1 to 8 lie on the Cytoplasmic side of the membrane; that stretch reads MHNLQVRR. The helical transmembrane segment at 9-35 threads the bilayer; sequence HYAALKGFYLFAFLGTGSIIPLLSMYL. Residues 36 to 42 lie on the Extracellular side of the membrane; the sequence is TKEQHLS. Residues 43–71 traverse the membrane as a helical segment; it reads GSQVGLIMSLGPIVMIFFQPFWGMLSDYT. Residues 72–75 are Cytoplasmic-facing; it reads QKTK. The chain crosses the membrane as a helical span at residues 76–101; that stretch reads GLLAVCTSITGIIGLAYIAFDSFPLF. Residues 102–105 lie on the Extracellular side of the membrane; the sequence is ILIA. Residues 106 to 123 form a helical membrane-spanning segment; the sequence is ACFAAFQSTIIPLSDSIS. The Cytoplasmic portion of the chain corresponds to 124 to 134; the sequence is LRYTQETNGNY. A helical transmembrane segment spans residues 135 to 157; that stretch reads GGIRLFGSLGFGVAVFAMGQVTN. Over 158-160 the chain is Extracellular; that stretch reads QLY. Residues 161 to 180 traverse the membrane as a helical segment; sequence PIHVIFIFGCAFLCIAAILA. Residues 181 to 210 lie on the Cytoplasmic side of the membrane; sequence SQVPGQQKTTKVNIRKGFRELISNKTFLIF. The helical transmembrane segment at 211–230 threads the bilayer; the sequence is MIITFTTFAPNLANNTYFSL. Topologically, residues 231-234 are extracellular; it reads FLDK. A helical membrane pass occupies residues 235–259; that stretch reads SGASLSAIGILFFIGVISEIPFMRF. Topologically, residues 260-269 are cytoplasmic; it reads AQTFIDKMGL. A helical transmembrane segment spans residues 270–289; the sequence is LNVIMLSGGVSLFRWALYFT. Over 290–292 the chain is Extracellular; the sequence is APS. A helical membrane pass occupies residues 293-315; sequence LWIIYATVFLQGVAIGLFIPAAL. Over 316–327 the chain is Cytoplasmic; the sequence is QYVKKITPRHVE. A helical membrane pass occupies residues 328 to 355; it reads ATALTMYAAIGNGFGNWFCTFAGGYIFD. The Extracellular segment spans residues 356-358; that stretch reads YVS. Residues 359 to 379 form a helical membrane-spanning segment; it reads IFAVYLLFGILSIAGFGLTLY. The Cytoplasmic portion of the chain corresponds to 380 to 399; the sequence is LMKAEKNKHTLHQPAVTFKP.

The protein belongs to the major facilitator superfamily.

The protein resides in the cell membrane. This is an uncharacterized protein from Bacillus subtilis (strain 168).